A 78-amino-acid polypeptide reads, in one-letter code: D-alanyl carrier protein (78 aa).

The Carrier domain occupies 1 to 78 (MEFRDQVLDL…KIVAVLEELR (78 aa)). The residue at position 36 (Ser-36) is an O-(pantetheine 4'-phosphoryl)serine.

It belongs to the DltC family. In terms of processing, 4'-phosphopantetheine is transferred from CoA to a specific serine of apo-DCP.

Its subcellular location is the cytoplasm. It functions in the pathway cell wall biogenesis; lipoteichoic acid biosynthesis. Functionally, carrier protein involved in the D-alanylation of lipoteichoic acid (LTA). The loading of thioester-linked D-alanine onto DltC is catalyzed by D-alanine--D-alanyl carrier protein ligase DltA. The DltC-carried D-alanyl group is further transferred to cell membrane phosphatidylglycerol (PG) by forming an ester bond, probably catalyzed by DltD. D-alanylation of LTA plays an important role in modulating the properties of the cell wall in Gram-positive bacteria, influencing the net charge of the cell wall. This Staphylococcus saprophyticus subsp. saprophyticus (strain ATCC 15305 / DSM 20229 / NCIMB 8711 / NCTC 7292 / S-41) protein is D-alanyl carrier protein.